Here is a 730-residue protein sequence, read N- to C-terminus: DNA ligase (730 aa).

Positions 1–23 (MAGEQHAQPTSVPAEAREKHAQL) are disordered. NAD(+)-binding positions include 44–48 (DAEFD), 93–94 (SL), and E124. K126 functions as the N6-AMP-lysine intermediate in the catalytic mechanism. Positions 147, 184, 300, and 324 each coordinate NAD(+). Zn(2+) contacts are provided by C418, C421, C437, and C443. Residues 638–727 (EGPRPLEGLT…PEAAAEVALP (90 aa)) enclose the BRCT domain.

Belongs to the NAD-dependent DNA ligase family. LigA subfamily. Mg(2+) is required as a cofactor. Mn(2+) serves as cofactor.

The catalysed reaction is NAD(+) + (deoxyribonucleotide)n-3'-hydroxyl + 5'-phospho-(deoxyribonucleotide)m = (deoxyribonucleotide)n+m + AMP + beta-nicotinamide D-nucleotide.. In terms of biological role, DNA ligase that catalyzes the formation of phosphodiester linkages between 5'-phosphoryl and 3'-hydroxyl groups in double-stranded DNA using NAD as a coenzyme and as the energy source for the reaction. It is essential for DNA replication and repair of damaged DNA. In Streptomyces avermitilis (strain ATCC 31267 / DSM 46492 / JCM 5070 / NBRC 14893 / NCIMB 12804 / NRRL 8165 / MA-4680), this protein is DNA ligase.